A 366-amino-acid chain; its full sequence is Holliday junction branch migration complex subunit RuvB (366 aa).

The tract at residues 1-49 (MAIISSKKQPPEPNGQPNKRPESAPAAPKEKVLQPEAAIDEQGKQEESI) is disordered. Residues 13-210 (PNGQPNKRPE…FGLIQKLRFY (198 aa)) form a large ATPase domain (RuvB-L) region. ATP-binding positions include I49, R50, G91, K94, T95, T96, 157-159 (EDY), R200, Y210, and R247. T95 lines the Mg(2+) pocket. The tract at residues 211-281 (EVDELSQIVL…IAAEALQLFQ (71 aa)) is small ATPAse domain (RuvB-S). A head domain (RuvB-H) region spans residues 284 to 366 (PCGLDWTDRR…TPPNEQLSLL (83 aa)). R339 and R344 together coordinate DNA.

The protein belongs to the RuvB family. Homohexamer. Forms an RuvA(8)-RuvB(12)-Holliday junction (HJ) complex. HJ DNA is sandwiched between 2 RuvA tetramers; dsDNA enters through RuvA and exits via RuvB. An RuvB hexamer assembles on each DNA strand where it exits the tetramer. Each RuvB hexamer is contacted by two RuvA subunits (via domain III) on 2 adjacent RuvB subunits; this complex drives branch migration. In the full resolvosome a probable DNA-RuvA(4)-RuvB(12)-RuvC(2) complex forms which resolves the HJ.

The protein resides in the cytoplasm. It carries out the reaction ATP + H2O = ADP + phosphate + H(+). The RuvA-RuvB-RuvC complex processes Holliday junction (HJ) DNA during genetic recombination and DNA repair, while the RuvA-RuvB complex plays an important role in the rescue of blocked DNA replication forks via replication fork reversal (RFR). RuvA specifically binds to HJ cruciform DNA, conferring on it an open structure. The RuvB hexamer acts as an ATP-dependent pump, pulling dsDNA into and through the RuvAB complex. RuvB forms 2 homohexamers on either side of HJ DNA bound by 1 or 2 RuvA tetramers; 4 subunits per hexamer contact DNA at a time. Coordinated motions by a converter formed by DNA-disengaged RuvB subunits stimulates ATP hydrolysis and nucleotide exchange. Immobilization of the converter enables RuvB to convert the ATP-contained energy into a lever motion, pulling 2 nucleotides of DNA out of the RuvA tetramer per ATP hydrolyzed, thus driving DNA branch migration. The RuvB motors rotate together with the DNA substrate, which together with the progressing nucleotide cycle form the mechanistic basis for DNA recombination by continuous HJ branch migration. Branch migration allows RuvC to scan DNA until it finds its consensus sequence, where it cleaves and resolves cruciform DNA. This chain is Holliday junction branch migration complex subunit RuvB, found in Trichormus variabilis (strain ATCC 29413 / PCC 7937) (Anabaena variabilis).